A 395-amino-acid polypeptide reads, in one-letter code: MQASCNQLHDPPGTAHEDAAASPCGHSRSTEGSLHPGDVHIQINSGPKEYSENPSSRNPRSGVCTCAHGCVHGRFRSYSHSEARPPDDFATESGEHGSGSFSEFRYLFKWLQKSLPYILILGIKLVMQHITGISLGIGLLTTFMYANKSIVNQVFLRERSSKLRCAWLLVFLAGSSVLLYYTFHSQSLHYSLIFLNPTLEQLSFWEVLWIVGITDFILKFFFMGLKCLILLVPSFIMPFKSKGYWYMLLEELCQYYRIFVPIPVWFRYLISYGEFGNVTTWSLGILLALLYLILKLLDFFGHLRTFRQVLRVFFTRPSYGVPASKRQCSDMDGICTICQAEFQKPVLLFCQHIFCEECITLWFNREKTCPLCRTVISECINKWKDGATSSHLQMY.

2 disordered regions span residues 1-58 (MQAS…SSRN) and 78-97 (YSHS…GEHG). 6 helical membrane passes run 118-138 (ILIL…LGIG), 165-185 (CAWL…TFHS), 193-213 (IFLN…IVGI), 216-236 (FILK…PSFI), 258-278 (IFVP…FGNV), and 283-303 (LGIL…FGHL). The segment at 328-379 (CSDMDGICTICQAEFQKPVLLFCQHIFCEECITLWFNREKTCPLCRTVISEC) is required for ubiquitin ligase activity and for protection against ER stress-induced cell death. Residues 335-373 (CTICQAEFQKPVLLFCQHIFCEECITLWFNREKTCPLCR) form an RING-type zinc finger.

Predominantly expressed in testis.

The protein localises to the early endosome membrane. It catalyses the reaction S-ubiquitinyl-[E2 ubiquitin-conjugating enzyme]-L-cysteine + [acceptor protein]-L-lysine = [E2 ubiquitin-conjugating enzyme]-L-cysteine + N(6)-ubiquitinyl-[acceptor protein]-L-lysine.. It participates in protein modification; protein ubiquitination. In terms of biological role, E3 ubiquitin-protein ligase that acts in the endoplasmic reticulum (ER)-associated degradation (ERAD) pathway, which targets misfolded proteins that accumulate in the endoplasmic reticulum (ER) for ubiquitination and subsequent proteasome-mediated degradation. Protects cells from ER stress-induced apoptosis. The chain is E3 ubiquitin-protein ligase RNFT1 (Rnft1) from Mus musculus (Mouse).